Consider the following 91-residue polypeptide: DNA-directed RNA polymerase subunit omega (91 aa).

It belongs to the RNA polymerase subunit omega family. The RNAP catalytic core consists of 2 alpha, 1 beta, 1 beta' and 1 omega subunit. When a sigma factor is associated with the core the holoenzyme is formed, which can initiate transcription.

It catalyses the reaction RNA(n) + a ribonucleoside 5'-triphosphate = RNA(n+1) + diphosphate. In terms of biological role, promotes RNA polymerase assembly. Latches the N- and C-terminal regions of the beta' subunit thereby facilitating its interaction with the beta and alpha subunits. The polypeptide is DNA-directed RNA polymerase subunit omega (Shigella flexneri).